A 331-amino-acid polypeptide reads, in one-letter code: Phenylalanine--tRNA ligase alpha subunit (331 aa).

Glutamate 252 lines the Mg(2+) pocket.

Belongs to the class-II aminoacyl-tRNA synthetase family. Phe-tRNA synthetase alpha subunit type 1 subfamily. In terms of assembly, tetramer of two alpha and two beta subunits. Mg(2+) serves as cofactor.

The protein resides in the cytoplasm. It carries out the reaction tRNA(Phe) + L-phenylalanine + ATP = L-phenylalanyl-tRNA(Phe) + AMP + diphosphate + H(+). This is Phenylalanine--tRNA ligase alpha subunit from Xanthomonas axonopodis pv. citri (strain 306).